The primary structure comprises 540 residues: Beta-2-syntrophin (540 aa).

A disordered region spans residues 73–114 (LPNGGGAGDSLPGSPSRGLGPPSPPAPPRGPAGEAGASPPVR). Residues 81 to 92 (DSLPGSPSRGLG) show a composition bias toward low complexity. A compositionally biased stretch (pro residues) spans 93-102 (PPSPPAPPRG). Residues Ser-95, Ser-110, Ser-129, Ser-211, Ser-222, Ser-233, Ser-393, and Ser-395 each carry the phosphoserine modification. Over residues 103-112 (PAGEAGASPP) the composition is skewed to low complexity. The region spanning 115–198 (RVRVVKQEAG…EVLLEVKFIR (84 aa)) is the PDZ domain. 2 consecutive PH domains span residues 163-300 (ILSV…TNIM) and 325-437 (EVKH…QGCH). The interval 220-240 (PQSPSFSGSEDSGSPKHQNST) is disordered. Residues 222 to 231 (SPSFSGSEDS) show a composition bias toward low complexity. Positions 484 to 540 (PFERLKMSADDGIRNLYLDFGGPEGELTMDLHSCPKPIVFVLHTFLSAKVTRMGLLV) constitute an SU domain. The tract at residues 518–540 (PKPIVFVLHTFLSAKVTRMGLLV) is calmodulin-binding.

The protein belongs to the syntrophin family. Monomer and homodimer. Interacts with the other members of the syntrophin family: SNTA1 and SNTB1; and with the sodium channel proteins SCN4A and SCN5A. Interacts with SAST, MAST205, microtubules and microtubule-associated proteins. Interacts with the dystrophin protein DMD and related proteins DTNA and UTRN, and with the neuroregulin receptor ERBB4. Interacts with PTPRN when phosphorylated, protecting PTPRN from protein cleavage by CAPN1. Dephosphorylation upon insulin stimulation disrupts the interaction with PTPRN and results in the cleavage of PTPRN. Interacts with DTNB. In terms of processing, phosphorylated. Partially dephosphorylated upon insulin stimulation. As to expression, ubiquitous. Isoform 1 is the predominant isoform. Weak level of isoform 2 is present in all tested tissues, except in liver and heart where it is highly expressed.

It is found in the membrane. The protein localises to the cytoplasmic vesicle. The protein resides in the secretory vesicle membrane. Its subcellular location is the cell junction. It localises to the cytoplasm. It is found in the cytoskeleton. Its function is as follows. Adapter protein that binds to and probably organizes the subcellular localization of a variety of membrane proteins. May link various receptors to the actin cytoskeleton and the dystrophin glycoprotein complex. May play a role in the regulation of secretory granules via its interaction with PTPRN. In Homo sapiens (Human), this protein is Beta-2-syntrophin (SNTB2).